The following is a 151-amino-acid chain: Protein Smg homolog (151 aa).

It belongs to the Smg family.

In Laribacter hongkongensis (strain HLHK9), this protein is Protein Smg homolog.